Reading from the N-terminus, the 36-residue chain is Protein YibY (36 aa).

The chain is Protein YibY from Escherichia coli (strain K12).